A 387-amino-acid polypeptide reads, in one-letter code: Succinate--CoA ligase [ADP-forming] subunit beta (387 aa).

One can recognise an ATP-grasp domain in the interval 9 to 244; it reads KQLFASYGLP…VSQEDDRENR (236 aa). Residues lysine 46, 53 to 55, glutamate 99, cysteine 102, and glutamate 107 each bind ATP; that span reads GRG. Residues asparagine 199 and aspartate 213 each contribute to the Mg(2+) site. Residues asparagine 264 and 321 to 323 each bind substrate; that span reads GIV.

This sequence belongs to the succinate/malate CoA ligase beta subunit family. As to quaternary structure, heterotetramer of two alpha and two beta subunits. Requires Mg(2+) as cofactor.

The catalysed reaction is succinate + ATP + CoA = succinyl-CoA + ADP + phosphate. The enzyme catalyses GTP + succinate + CoA = succinyl-CoA + GDP + phosphate. The protein operates within carbohydrate metabolism; tricarboxylic acid cycle; succinate from succinyl-CoA (ligase route): step 1/1. Succinyl-CoA synthetase functions in the citric acid cycle (TCA), coupling the hydrolysis of succinyl-CoA to the synthesis of either ATP or GTP and thus represents the only step of substrate-level phosphorylation in the TCA. The beta subunit provides nucleotide specificity of the enzyme and binds the substrate succinate, while the binding sites for coenzyme A and phosphate are found in the alpha subunit. In Legionella pneumophila (strain Corby), this protein is Succinate--CoA ligase [ADP-forming] subunit beta.